A 123-amino-acid polypeptide reads, in one-letter code: Large-conductance mechanosensitive channel (123 aa).

2 helical membrane passes run 14-34 (VIDM…VKSL) and 67-87 (GSFL…FLMV).

The protein belongs to the MscL family. As to quaternary structure, homopentamer.

The protein resides in the cell membrane. Channel that opens in response to stretch forces in the membrane lipid bilayer. May participate in the regulation of osmotic pressure changes within the cell. In Limosilactobacillus reuteri (strain DSM 20016) (Lactobacillus reuteri), this protein is Large-conductance mechanosensitive channel.